Consider the following 676-residue polypeptide: Vitamin K-dependent protein S (676 aa).

The N-terminal stretch at 1–24 (MRVLGGRCGALLACLLLVLPVSEA) is a signal peptide. Positions 25–41 (NFLSKQQASQVLVRKRR) are excised as a propeptide. Residues 42–87 (ANSLLEETKQGNLERECIEELCNKEEAREVFENDPETDYFYPKYLV) enclose the Gla domain. 11 positions are modified to 4-carboxyglutamate: Glu-47, Glu-48, Glu-55, Glu-57, Glu-60, Glu-61, Glu-66, Glu-67, Glu-70, Glu-73, and Glu-77. Cys-58 and Cys-63 are joined by a disulfide. Residues 88-116 (CLRSFQTGLFTAARQSTNAYPDLRSCVNA) are thrombin-sensitive. The EGF-like 1 domain maps to 117–155 (IPDQCSPLPCNEDGYMSCKDGKASFTCTCKPGWQGEKCE). 13 disulfide bridges follow: Cys-121/Cys-134, Cys-126/Cys-143, Cys-145/Cys-154, Cys-161/Cys-175, Cys-171/Cys-184, Cys-186/Cys-199, Cys-205/Cys-217, Cys-212/Cys-226, Cys-228/Cys-241, Cys-247/Cys-256, Cys-252/Cys-265, Cys-267/Cys-282, and Cys-449/Cys-475. The residue at position 136 (Asp-136) is a (3R)-3-hydroxyaspartate. Residues 157–200 (DINECKDPSNINGGCSQICDNTPGSYHCSCKNGFVMLSNKKDCK) form the EGF-like 2; calcium-binding domain. In terms of domain architecture, EGF-like 3; calcium-binding spans 201-242 (DVDECSLKPSICGTAVCKNIPGDFECECPEGYRYNLKSKSCE). Residues 243 to 283 (DIDECSENMCAQLCVNYPGGYTCYCDGKKGFKLAQDQKSCE) form the EGF-like 4; calcium-binding domain. Laminin G-like domains lie at 299–475 (LLYL…NKHC) and 484–666 (YYPG…AHSC). N-linked (GlcNAc...) asparagine glycans are attached at residues Asn-499, Asn-509, and Asn-530. An intrachain disulfide couples Cys-639 to Cys-666.

Post-translationally, the iron and 2-oxoglutarate dependent 3-hydroxylation of aspartate and asparagine is (R) stereospecific within EGF domains. In terms of tissue distribution, plasma.

The protein localises to the secreted. Anticoagulant plasma protein; it is a cofactor to activated protein C in the degradation of coagulation factors Va and VIIIa. It helps to prevent coagulation and stimulating fibrinolysis. This chain is Vitamin K-dependent protein S (PROS1), found in Homo sapiens (Human).